The following is a 267-amino-acid chain: Indole-3-glycerol phosphate synthase (267 aa).

The protein belongs to the TrpC family.

It carries out the reaction 1-(2-carboxyphenylamino)-1-deoxy-D-ribulose 5-phosphate + H(+) = (1S,2R)-1-C-(indol-3-yl)glycerol 3-phosphate + CO2 + H2O. The protein operates within amino-acid biosynthesis; L-tryptophan biosynthesis; L-tryptophan from chorismate: step 4/5. This chain is Indole-3-glycerol phosphate synthase, found in Delftia acidovorans (strain DSM 14801 / SPH-1).